The primary structure comprises 355 residues: Anthranilate phosphoribosyltransferase (355 aa).

Residues Gly85, 88 to 89 (GD), Thr93, 95 to 98 (NIST), 113 to 121 (KHGNRAASS), and Ser125 each bind 5-phospho-alpha-D-ribose 1-diphosphate. Gly85 provides a ligand contact to anthranilate. Ser97 serves as a coordination point for Mg(2+). Asn116 contacts anthranilate. Position 171 (Arg171) interacts with anthranilate. Mg(2+) contacts are provided by Asp229 and Glu230.

Belongs to the anthranilate phosphoribosyltransferase family. In terms of assembly, homodimer. The cofactor is Mg(2+).

It catalyses the reaction N-(5-phospho-beta-D-ribosyl)anthranilate + diphosphate = 5-phospho-alpha-D-ribose 1-diphosphate + anthranilate. It participates in amino-acid biosynthesis; L-tryptophan biosynthesis; L-tryptophan from chorismate: step 2/5. Functionally, catalyzes the transfer of the phosphoribosyl group of 5-phosphorylribose-1-pyrophosphate (PRPP) to anthranilate to yield N-(5'-phosphoribosyl)-anthranilate (PRA). This is Anthranilate phosphoribosyltransferase from Acidothermus cellulolyticus (strain ATCC 43068 / DSM 8971 / 11B).